We begin with the raw amino-acid sequence, 1030 residues long: Exportin-T (1030 aa).

This sequence belongs to the exportin family.

It localises to the nucleus. Its subcellular location is the cytoplasm. In terms of biological role, tRNA nucleus export receptor which facilitates tRNA translocation across the nuclear pore complex. Involved in pre-tRNA splicing, probably by affecting the interaction of pre-tRNA with splicing endonuclease. This is Exportin-T (los1) from Aspergillus niger (strain ATCC MYA-4892 / CBS 513.88 / FGSC A1513).